Here is an 843-residue protein sequence, read N- to C-terminus: Eisosome protein 1 (843 aa).

A disordered region spans residues 1–54 (MSLISAVEDRDIHNIGKTSGGGSRTSSINSSKKSLKHGSKSLRKPKVYQTTGEP). Position 2 is an N-acetylserine (S2). A Phosphoserine modification is found at S2. A compositionally biased stretch (basic residues) spans 33-46 (KSLKHGSKSLRKPK). Residues S88 and S130 each carry the phosphoserine modification. Residues 120 to 176 (KMGPKVVRNNSITSATSKTSKESQTKRKSKESPGAAASKAYSMTMETTSLSSQTNSR) form a disordered region. 2 stretches are compositionally biased toward polar residues: residues 127–137 (RNNSITSATSK) and 163–176 (TMET…TNSR). Phosphoserine is present on residues S182, S401, S584, and S710. Positions 717–843 (DLPTQLEKIE…QDAISNQEKK (127 aa)) are disordered. The residue at position 720 (T720) is a Phosphothreonine. A compositionally biased stretch (low complexity) spans 752–764 (STAAKEATETSSA). 2 positions are modified to phosphoserine: S763 and S775. The segment covering 781–797 (SGKEDANDCKSAEHSKE) has biased composition (basic and acidic residues). Residues 798-810 (ISVSQKAGNNKSL) show a composition bias toward polar residues. Phosphoserine is present on residues S816, S828, S829, and S838.

The protein belongs to the EIS1 family.

The protein localises to the cytoplasmic granule. The protein resides in the cell membrane. In terms of biological role, required for normal formation of eisosomes, large cytoplasmic protein assemblies that localize to specialized domains on plasma membrane and mark the site of endocytosis. The polypeptide is Eisosome protein 1 (EIS1) (Saccharomyces cerevisiae (strain JAY291) (Baker's yeast)).